Here is a 467-residue protein sequence, read N- to C-terminus: FAD-dependent oxidoreductase dbaF (467 aa).

The N-terminal stretch at 1-20 is a signal peptide; it reads MKSVLASGALTLAFSLAALA. N-linked (GlcNAc...) asparagine glycans are attached at residues asparagine 96, asparagine 134, asparagine 337, asparagine 391, and asparagine 451.

The protein belongs to the beta-cyclopiazonate dehydrogenase family. FAD is required as a cofactor.

Its pathway is secondary metabolite biosynthesis. In terms of biological role, FAD-dependent oxidoreductase; part of the gene cluster that mediates the biosynthesis of the antibiotic 2,4-dihydroxy-3-methyl-6-(2-oxopropyl)benzaldehyde (DHMBA) and its derivatives. The direct non-reducing polyketide synthase dbaI product is 2,4-dihydroxy-3-methyl-6-(2-oxopropyl)benzaldehyde (DHMBA), produced by condensation of one acetyl-CoA starter unit with 4 malonyl-CoA units and one methylation step. The FAD-dependent monooxygenase dbaH is responsible for the synthesis of yellow pigments derived from the oxidation of DHMBA. The roles of dbaB, C, E and F have still to be determined. The chain is FAD-dependent oxidoreductase dbaF from Emericella nidulans (strain FGSC A4 / ATCC 38163 / CBS 112.46 / NRRL 194 / M139) (Aspergillus nidulans).